The sequence spans 173 residues: Ribosome maturation factor RimM (173 aa).

One can recognise a PRC barrel domain in the interval 92-165 (EGEFYHADLI…RVVIEMPGEI (74 aa)).

It belongs to the RimM family. As to quaternary structure, binds ribosomal protein uS19.

It is found in the cytoplasm. Functionally, an accessory protein needed during the final step in the assembly of 30S ribosomal subunit, possibly for assembly of the head region. Essential for efficient processing of 16S rRNA. May be needed both before and after RbfA during the maturation of 16S rRNA. It has affinity for free ribosomal 30S subunits but not for 70S ribosomes. This Nitrobacter hamburgensis (strain DSM 10229 / NCIMB 13809 / X14) protein is Ribosome maturation factor RimM.